A 506-amino-acid polypeptide reads, in one-letter code: ATP synthase subunit alpha (506 aa).

170 to 177 serves as a coordination point for ATP; sequence GDRQTGKT.

It belongs to the ATPase alpha/beta chains family. In terms of assembly, F-type ATPases have 2 components, CF(1) - the catalytic core - and CF(0) - the membrane proton channel. CF(1) has five subunits: alpha(3), beta(3), gamma(1), delta(1), epsilon(1). CF(0) has four main subunits: a(1), b(1), b'(1) and c(9-12).

The protein localises to the cellular thylakoid membrane. The enzyme catalyses ATP + H2O + 4 H(+)(in) = ADP + phosphate + 5 H(+)(out). Produces ATP from ADP in the presence of a proton gradient across the membrane. The alpha chain is a regulatory subunit. The chain is ATP synthase subunit alpha from Synechococcus sp. (strain CC9902).